Here is a 338-residue protein sequence, read N- to C-terminus: Ribosomal RNA small subunit methyltransferase C (338 aa).

Belongs to the methyltransferase superfamily. RsmC family. As to quaternary structure, monomer.

The protein localises to the cytoplasm. The catalysed reaction is guanosine(1207) in 16S rRNA + S-adenosyl-L-methionine = N(2)-methylguanosine(1207) in 16S rRNA + S-adenosyl-L-homocysteine + H(+). In terms of biological role, specifically methylates the guanine in position 1207 of 16S rRNA in the 30S particle. The protein is Ribosomal RNA small subunit methyltransferase C of Buchnera aphidicola subsp. Acyrthosiphon pisum (strain APS) (Acyrthosiphon pisum symbiotic bacterium).